The sequence spans 625 residues: MTAILDTIESPCDLKGVTQRELAQLAAELREKIITVCARNGGHLAPSLGVVELTLALHRVFDSPADKIIWDVGHQAYAHKLLTGRRDRFATLRTLGGISGFPKRCESSHDAFDTGHTSTSISAALGFAVARDLRGERNKVVAVIGDGSMTGGLAYEGLNNAGHLNKDLVVVLNDNEMSIAENVGALSNFLNRTVTSEFVHTMKKDLEGFLGGLDRIGHGVLKVAKRAEESLKGLFTPGMLFEAFGFEYIGPIDGHDTARLMETFEKVKRFDDAVLIHVLTKKGRGYPPAEEKPALFHGVGPFELETGKVIKGKGGAASYTGVFGEAIRKIAAEDERVIALTAAMPDGTGLTPFAADYPTRFFDVGIAEQHGVTFAAGLAAEGYRPVFAVYSSFLQRAYDQVFHDVCLQNLPVTFAIDRAGVVGSDGPTHHGLFDLAYLRHLPNMVVMAPKDENELQHLLLTAIEHDGPAAVRYPRGNGYGVSLDQTCSVLPIGKGEILREGLDGALLAIGSTVYPAREAAEALAAEGIDLAVVNARFVKPLDRDLILSLARTTGRLIIVEENVIQGGFGTAVLELLEEEGINGVKVLRLGYPDRYVEQGEQHELRAQYGLDAPGITARVRTFMKG.

Residues H74 and 115 to 117 contribute to the thiamine diphosphate site; that span reads GHT. Position 146 (D146) interacts with Mg(2+). Thiamine diphosphate is bound by residues 147 to 148, N175, Y286, and E368; that span reads GS. Mg(2+) is bound at residue N175.

Belongs to the transketolase family. DXPS subfamily. In terms of assembly, homodimer. Requires Mg(2+) as cofactor. Thiamine diphosphate is required as a cofactor.

It catalyses the reaction D-glyceraldehyde 3-phosphate + pyruvate + H(+) = 1-deoxy-D-xylulose 5-phosphate + CO2. The protein operates within metabolic intermediate biosynthesis; 1-deoxy-D-xylulose 5-phosphate biosynthesis; 1-deoxy-D-xylulose 5-phosphate from D-glyceraldehyde 3-phosphate and pyruvate: step 1/1. Its function is as follows. Catalyzes the acyloin condensation reaction between C atoms 2 and 3 of pyruvate and glyceraldehyde 3-phosphate to yield 1-deoxy-D-xylulose-5-phosphate (DXP). The sequence is that of 1-deoxy-D-xylulose-5-phosphate synthase 1 from Geobacter metallireducens (strain ATCC 53774 / DSM 7210 / GS-15).